The primary structure comprises 450 residues: Tubulin alpha-4 chain (450 aa).

Gln11 serves as a coordination point for GTP. Lys40 carries the post-translational modification N6-acetyllysine. Glu71, Gly144, Thr145, Thr179, Asn206, and Asn228 together coordinate GTP. Residue Glu71 coordinates Mg(2+). Glu254 is a catalytic residue. The disordered stretch occupies residues 431 to 450 (DYEEVGAESGEGDEGDEEEY).

The protein belongs to the tubulin family. As to quaternary structure, dimer of alpha and beta chains. A typical microtubule is a hollow water-filled tube with an outer diameter of 25 nm and an inner diameter of 15 nM. Alpha-beta heterodimers associate head-to-tail to form protofilaments running lengthwise along the microtubule wall with the beta-tubulin subunit facing the microtubule plus end conferring a structural polarity. Microtubules usually have 13 protofilaments but different protofilament numbers can be found in some organisms and specialized cells. The cofactor is Mg(2+). In terms of processing, undergoes a tyrosination/detyrosination cycle, the cyclic removal and re-addition of a C-terminal tyrosine residue by the enzymes tubulin tyrosine carboxypeptidase (TTCP) and tubulin tyrosine ligase (TTL), respectively. Post-translationally, acetylation of alpha chains at Lys-40 stabilizes microtubules and affects affinity and processivity of microtubule motors. This modification has a role in multiple cellular functions, ranging from cell motility, cell cycle progression or cell differentiation to intracellular trafficking and signaling.

Its subcellular location is the cytoplasm. It is found in the cytoskeleton. The enzyme catalyses GTP + H2O = GDP + phosphate + H(+). Its function is as follows. Tubulin is the major constituent of microtubules, a cylinder consisting of laterally associated linear protofilaments composed of alpha- and beta-tubulin heterodimers. Microtubules grow by the addition of GTP-tubulin dimers to the microtubule end, where a stabilizing cap forms. Below the cap, tubulin dimers are in GDP-bound state, owing to GTPase activity of alpha-tubulin. The protein is Tubulin alpha-4 chain of Gossypium hirsutum (Upland cotton).